We begin with the raw amino-acid sequence, 155 residues long: uncharacterized protein (155 aa).

Positions 28-38 (KKGKDRPREDG) are enriched in basic and acidic residues. Residues 28 to 52 (KKGKDRPREDGTQQQPSESKGEAAC) form a disordered region.

This is an uncharacterized protein from Dryophytes versicolor (chameleon treefrog).